The sequence spans 260 residues: MGFLEEKKILVTGISNKYSIAFGIAKALHKQNATLAFSYHTDRLKNKVYELAKELGVKIVIPCDVSDDNSIKRLFFNISKKWITFDGFIHSIAFAPKNQLSGDYVSSITRLDFSNVLDVSSYSFVGMAKACRSILKKGSSLLTLSYIGSKKVVPNYNVMGIAKASLESNVRYMASCMGLNGIRVNAISSSPIKTLSSYHIKNFKKILNHTTSRSLNNNLTTVEDVGNTAAFLCSDLSKGITGQIIYVDGGFNITAMSNSE.

Residues Gly13, 19–20, 64–65, and Ile92 each bind NAD(+); these read SI and DV. Ala95 contacts substrate. Catalysis depends on proton acceptor residues Tyr146 and Tyr156. NAD(+) contacts are provided by residues Lys163 and 192-194; that span reads IKT.

This sequence belongs to the short-chain dehydrogenases/reductases (SDR) family. FabI subfamily. In terms of assembly, homotetramer.

The catalysed reaction is a 2,3-saturated acyl-[ACP] + NAD(+) = a (2E)-enoyl-[ACP] + NADH + H(+). Its pathway is lipid metabolism; fatty acid biosynthesis. The protein operates within cofactor biosynthesis; biotin biosynthesis. Functionally, catalyzes the reduction of a carbon-carbon double bond in an enoyl moiety that is covalently linked to an acyl carrier protein (ACP). Involved in the elongation cycle of fatty acid which are used in the lipid metabolism and in the biotin biosynthesis. This chain is Enoyl-[acyl-carrier-protein] reductase [NADH] FabI (fabI), found in Buchnera aphidicola subsp. Baizongia pistaciae (strain Bp).